The chain runs to 248 residues: tRNA N(3)-methylcytidine methyltransferase trm141 (248 aa).

6 residues coordinate S-adenosyl-L-methionine: Trp-23, Tyr-27, Gly-63, Asp-86, Asp-112, and Ile-133.

Belongs to the methyltransferase superfamily. METL family.

It is found in the cytoplasm. The protein resides in the nucleus. It carries out the reaction cytidine(32) in tRNA(Ser) + S-adenosyl-L-methionine = N(3)-methylcytidine(32) in tRNA(Ser) + S-adenosyl-L-homocysteine + H(+). In terms of biological role, S-adenosyl-L-methionine-dependent methyltransferase that mediates N(3)-methylcytidine modification of residue 32 of the tRNA anticodon loop of tRNA(Ser). N(3)-methylcytidine methylation by trm141 requires the formation of N(6)-dimethylallyladenosine(37) (i6A37) by tit1 as prerequisite. Does not catalyze N(3)-methylcytidine modification of tRNA(Thr). This chain is tRNA N(3)-methylcytidine methyltransferase trm141, found in Schizosaccharomyces pombe (strain 972 / ATCC 24843) (Fission yeast).